The following is a 615-amino-acid chain: 1-deoxy-D-xylulose-5-phosphate synthase (615 aa).

Thiamine diphosphate is bound by residues H72 and 113 to 115; that span reads GHA. D144 is a Mg(2+) binding site. Residues 145–146, N173, Y281, and E360 contribute to the thiamine diphosphate site; that span reads GA. Residue N173 participates in Mg(2+) binding.

Belongs to the transketolase family. DXPS subfamily. As to quaternary structure, homodimer. It depends on Mg(2+) as a cofactor. Thiamine diphosphate is required as a cofactor.

It catalyses the reaction D-glyceraldehyde 3-phosphate + pyruvate + H(+) = 1-deoxy-D-xylulose 5-phosphate + CO2. The protein operates within metabolic intermediate biosynthesis; 1-deoxy-D-xylulose 5-phosphate biosynthesis; 1-deoxy-D-xylulose 5-phosphate from D-glyceraldehyde 3-phosphate and pyruvate: step 1/1. Its function is as follows. Catalyzes the acyloin condensation reaction between C atoms 2 and 3 of pyruvate and glyceraldehyde 3-phosphate to yield 1-deoxy-D-xylulose-5-phosphate (DXP). This is 1-deoxy-D-xylulose-5-phosphate synthase from Thermus thermophilus (strain ATCC 27634 / DSM 579 / HB8).